A 256-amino-acid chain; its full sequence is uncharacterized protein (256 aa).

The first 24 residues, Met1–Gly24, serve as a signal peptide directing secretion. Cys25 carries N-palmitoyl cysteine lipidation. Cys25 carries the S-diacylglycerol cysteine lipid modification.

This sequence belongs to the staphylococcal tandem lipoprotein family.

Its subcellular location is the cell membrane. This is an uncharacterized protein from Staphylococcus aureus.